A 103-amino-acid chain; its full sequence is MRELTSEIKKEIRDIVYDFFSEECEVDINELNDNTSVVDDLDGDSLMLIELVDILKKKYSLNIQLQSIGKYLLKNPAETLEKVVQTTYLLYEYENDITNVGEK.

Residues 3 to 87 (ELTSEIKKEI…ETLEKVVQTT (85 aa)) form the Carrier domain. Residue Ser45 is modified to O-(pantetheine 4'-phosphoryl)serine.

Post-translationally, 4'-phosphopantetheine is transferred from CoA to a specific serine of the apo-ACP-like protein.

Its subcellular location is the cytoplasm. In terms of biological role, acyl carrier protein. This is Acyl carrier protein homolog from Clostridium acetobutylicum (strain ATCC 824 / DSM 792 / JCM 1419 / IAM 19013 / LMG 5710 / NBRC 13948 / NRRL B-527 / VKM B-1787 / 2291 / W).